Here is a 282-residue protein sequence, read N- to C-terminus: MKRETVQVLLEALPYIKEFHGKTFVIKFGGSAMKNENAKEAFIKDLVLLKYTGINPVIVHGGGSEISSLMNQLGIEPVFKNGYRITDEKTMEIVEMVLVGKVNKDIVMNINLHGGKAIGVCGKDGELLLAEKETKYGDIGYVGKVKKVDTTLIKGLLVEGYIPVIAPIGFGEDGTSYNINADIVAAEIAKSLEVEKLVLLTDVDGVFKDGKLLPILSSKEAEDLIEKNIVKGGMIPKLQCAISAVNSGVKSVHIINGGVEHALLLEIFSKEGIGTMIKNLEV.

Residues 62 to 63 (GG), Arg-84, and Asn-178 each bind substrate.

This sequence belongs to the acetylglutamate kinase family. ArgB subfamily.

It localises to the cytoplasm. It carries out the reaction N-acetyl-L-glutamate + ATP = N-acetyl-L-glutamyl 5-phosphate + ADP. The protein operates within amino-acid biosynthesis; L-arginine biosynthesis; N(2)-acetyl-L-ornithine from L-glutamate: step 2/4. Catalyzes the ATP-dependent phosphorylation of N-acetyl-L-glutamate. The sequence is that of Acetylglutamate kinase from Kosmotoga olearia (strain ATCC BAA-1733 / DSM 21960 / TBF 19.5.1).